A 310-amino-acid chain; its full sequence is CCR4-NOT transcription complex subunit 7 (310 aa).

Asp-51, Glu-53, Asp-172, and Asp-245 together coordinate a divalent metal cation.

It belongs to the CAF1 family. Component of the CCR4-NOT complex at least composed of ccf-1, ccr-4 and let-711, which is required for germ cell development in hermaphrodites. Within the complex interacts with let-711. As to expression, highly expressed in the germline. In particular, highly expressed in germ cells that enter meiosis and progress through the pachytene stage.

The protein localises to the nucleus. It is found in the cytoplasm. The catalysed reaction is Exonucleolytic cleavage of poly(A) to 5'-AMP.. Catalytic component of the CCR4-NOT complex which is one of the major cellular mRNA deadenylases and is linked to various cellular processes including bulk mRNA degradation, miRNA-mediated repression, translational repression during translational initiation and general transcription regulation. Within the complex, plays a role in miRNA-mediated deadenylation in embryos. Within the complex promotes germ cell development and fertility in hermaphrodites. Additional complex functions may be a consequence of its influence on mRNA expression. The polypeptide is CCR4-NOT transcription complex subunit 7 (Caenorhabditis elegans).